We begin with the raw amino-acid sequence, 300 residues long: GTPase Era (300 aa).

Positions 8-176 constitute an Era-type G domain; it reads RCGYVAIVGR…EALIAKHLPE (169 aa). The tract at residues 16–23 is G1; sequence GRPNVGKS. GTP is bound at residue 16–23; it reads GRPNVGKS. The G2 stretch occupies residues 42-46; sequence QTTRH. Residues 63–66 are G3; the sequence is DTPG. Residues 63 to 67 and 125 to 128 contribute to the GTP site; these read DTPGM and NKTD. The segment at 125–128 is G4; it reads NKTD. Residues 155 to 157 form a G5 region; sequence ISA. The KH type-2 domain occupies 199 to 283; that stretch reads VREKIMRQLG…MLNLWVKVKG (85 aa).

This sequence belongs to the TRAFAC class TrmE-Era-EngA-EngB-Septin-like GTPase superfamily. Era GTPase family. As to quaternary structure, monomer.

It localises to the cytoplasm. It is found in the cell inner membrane. An essential GTPase that binds both GDP and GTP, with rapid nucleotide exchange. Plays a role in 16S rRNA processing and 30S ribosomal subunit biogenesis and possibly also in cell cycle regulation and energy metabolism. The polypeptide is GTPase Era (Pseudomonas putida (strain W619)).